A 95-amino-acid chain; its full sequence is MSRRCELTGKGPMTGNNVSHANNKTRRRFLPNLNDVTLQSETLGRGVKLRISAAALRSVDHRGGLDAFLAKAKDEDLSDAALKVKKEIAKAQAAA.

The disordered stretch occupies residues 1–22 (MSRRCELTGKGPMTGNNVSHAN).

It belongs to the bacterial ribosomal protein bL28 family.

The polypeptide is Large ribosomal subunit protein bL28 (Ruegeria pomeroyi (strain ATCC 700808 / DSM 15171 / DSS-3) (Silicibacter pomeroyi)).